Consider the following 283-residue polypeptide: 3-methyl-2-oxobutanoate hydroxymethyltransferase (283 aa).

The Mg(2+) site is built by Asp44 and Asp83. Residues 44–45 (DS), Asp83, and Lys112 each bind 3-methyl-2-oxobutanoate. Glu114 contacts Mg(2+). Glu181 functions as the Proton acceptor in the catalytic mechanism.

The protein belongs to the PanB family. Homodecamer; pentamer of dimers. Mg(2+) is required as a cofactor.

The protein resides in the cytoplasm. It carries out the reaction 3-methyl-2-oxobutanoate + (6R)-5,10-methylene-5,6,7,8-tetrahydrofolate + H2O = 2-dehydropantoate + (6S)-5,6,7,8-tetrahydrofolate. The protein operates within cofactor biosynthesis; coenzyme A biosynthesis. Functionally, catalyzes the reversible reaction in which hydroxymethyl group from 5,10-methylenetetrahydrofolate is transferred onto alpha-ketoisovalerate to form ketopantoate. This is 3-methyl-2-oxobutanoate hydroxymethyltransferase from Pyrococcus furiosus (strain ATCC 43587 / DSM 3638 / JCM 8422 / Vc1).